The primary structure comprises 396 residues: L-cysteine desulfidase (396 aa).

Cys23 functions as the Proton acceptor in the catalytic mechanism. Cys288, Cys330, and Cys337 together coordinate [4Fe-4S] cluster.

The protein belongs to the L-cysteine desulfidase family. In terms of assembly, homotrimer. [4Fe-4S] cluster is required as a cofactor.

It carries out the reaction L-cysteine + H2O = hydrogen sulfide + pyruvate + NH4(+) + H(+). Its function is as follows. Catalyzes the cleavage of L-cysteine to form 2-aminoprop-2-enoate and sulfide. The former then spontaneously hydrolyzes to pyruvate and NH(3). May be responsible for the production of sulfide required for the biosynthesis of iron-sulfur centers in this archaea. In Methanococcus maripaludis (strain C6 / ATCC BAA-1332), this protein is L-cysteine desulfidase.